Reading from the N-terminus, the 221-residue chain is Iron-sulfur cluster repair protein YtfE (221 aa).

Belongs to the RIC family. YtfE subfamily. As to quaternary structure, homodimer.

The protein resides in the cytoplasm. Its function is as follows. Di-iron-containing protein involved in the repair of iron-sulfur clusters damaged by oxidative and nitrosative stress conditions. This chain is Iron-sulfur cluster repair protein YtfE, found in Yersinia pestis bv. Antiqua (strain Antiqua).